Consider the following 469-residue polypeptide: Adenosylhomocysteinase (469 aa).

The substrate site is built by threonine 60, aspartate 135, and glutamate 195. 196–198 (TTT) serves as a coordination point for NAD(+). Residues lysine 225 and aspartate 229 each contribute to the substrate site. NAD(+) contacts are provided by residues asparagine 230, 259–264 (GYGDVG), glutamate 282, asparagine 317, 338–340 (IGH), and asparagine 383.

Belongs to the adenosylhomocysteinase family. It depends on NAD(+) as a cofactor.

It localises to the cytoplasm. It catalyses the reaction S-adenosyl-L-homocysteine + H2O = L-homocysteine + adenosine. It participates in amino-acid biosynthesis; L-homocysteine biosynthesis; L-homocysteine from S-adenosyl-L-homocysteine: step 1/1. Functionally, may play a key role in the regulation of the intracellular concentration of adenosylhomocysteine. In Hyphomonas neptunium (strain ATCC 15444), this protein is Adenosylhomocysteinase.